Consider the following 232-residue polypeptide: Large ribosomal subunit protein uL1 (232 aa).

The protein belongs to the universal ribosomal protein uL1 family. Part of the 50S ribosomal subunit.

Functionally, binds directly to 23S rRNA. The L1 stalk is quite mobile in the ribosome, and is involved in E site tRNA release. Its function is as follows. Protein L1 is also a translational repressor protein, it controls the translation of the L11 operon by binding to its mRNA. The protein is Large ribosomal subunit protein uL1 of Liberibacter asiaticus (Citrus greening disease).